A 668-amino-acid chain; its full sequence is Echinocandin B biosynthetic cluster protein J (668 aa).

5 disordered regions span residues 1–20 (MHFA…DQSL), 92–113 (YTPP…PPTP), 224–322 (PLDH…QSAD), 330–349 (EVAE…SIPT), and 483–506 (NCSS…PPLK). Polar residues predominate over residues 96–106 (SLDSRSSATPP). Pro residues predominate over residues 264 to 275 (NPEPGTPTPPSP). The span at 311 to 322 (YRSTPSPCQSAD) shows a compositional bias: polar residues. The segment covering 484-494 (CSSSSCSSSAS) has biased composition (low complexity). Basic and acidic residues predominate over residues 495–505 (KKNEEKREPPL).

Its pathway is antifungal biosynthesis. In terms of biological role, part of the gene cluster that mediates the biosynthesis of echinocandin B, a fungal lipidated cyclic hexapeptide that acts as an antifungal agent. Linoleoyl-AMP, produced by the fatty-acyl-AMP ligase ecdI, is transferred to the initiation carrier domain (T0) of ecdA. The linoleoyl-S-phosphopantetheinyl-T0 is sequentially extended with L-ornithine, L-threonine, L-proline, L-homotyrosine, L-threonine, and 4R-methyl-L-proline to form the linear hexapeptide. Thereafter, the terminal condensation (C7) performs macrocyclization of the NRPS product and the cyclic scaffold is released from ecdA. All six of the amino acid residues are hydroxylated, including 4R,5R-dihydroxy-L-ornithine, 4R-hydroxyl-L-proline, 3S,4S-dihydroxy-L-homotyrosine, and 3S-hydroxyl-4S-methyl-L-prolin. In the pathway, all the hydroxylation reactions are proposed to occur following completion of the cyclic peptide, so the unhydroxylated precursor produced by ecdA will undergo six rounds of hydroxylation. Five hydroxylase genes (ecdG, ecdH, ecdK, htyE and htyF) are embedded within the echinocandin B (ecd) and L-homotyrosine (hty) clusters. This is Echinocandin B biosynthetic cluster protein J from Aspergillus rugulosus (Emericella rugulosa).